The chain runs to 75 residues: Exodeoxyribonuclease 7 small subunit (75 aa).

The protein belongs to the XseB family. Heterooligomer composed of large and small subunits.

Its subcellular location is the cytoplasm. The catalysed reaction is Exonucleolytic cleavage in either 5'- to 3'- or 3'- to 5'-direction to yield nucleoside 5'-phosphates.. Its function is as follows. Bidirectionally degrades single-stranded DNA into large acid-insoluble oligonucleotides, which are then degraded further into small acid-soluble oligonucleotides. The protein is Exodeoxyribonuclease 7 small subunit of Clostridium perfringens (strain ATCC 13124 / DSM 756 / JCM 1290 / NCIMB 6125 / NCTC 8237 / Type A).